The sequence spans 790 residues: Tumor necrosis factor alpha-induced protein 3 (790 aa).

Ala-2 bears the N-acetylalanine mark. The segment at 58–300 (PQFREIIHKA…LTDPENEMKE (243 aa)) is TRAF-binding. The 172-residue stretch at 92-263 (LVALKTNGDG…SHHFVPLVTL (172 aa)) folds into the OTU domain. Residue Asp-100 is part of the active site. Cys-103 acts as the Nucleophile in catalysis. Interaction with ubiquitin regions lie at residues 157–159 (LCY), 190–192 (SLE), and 224–227 (FAPL). His-256 acts as the Proton acceptor in catalysis. Over residues 357-368 (QENSEQGRREGH) the composition is skewed to basic and acidic residues. The segment at 357-377 (QENSEQGRREGHAQNPMEPSV) is disordered. The interaction with TNIP1 stretch occupies residues 369-775 (AQNPMEPSVP…ACDHFGNAKC (407 aa)). An A20-type 1 zinc finger spans residues 381–416 (SLMDVKCETPNCPFFMSVNTQPLCHECSERRQKNQN). Residues 386–453 (KCETPNCPFF…EPLAWNPEES (68 aa)) are interaction with RIPK1. Cys-387, Cys-392, Cys-404, and Cys-407 together coordinate Zn(2+). Disordered stretches follow at residues 415-434 (QNKL…PGMA) and 447-468 (AWNP…PSPF). Ser-459 bears the Phosphoserine mark. 2 consecutive A20-type zinc fingers follow at residues 472–507 (ETTA…LHAS) and 515–548 (HLDP…AEAS). Residues Cys-478, Cys-483, Cys-495, Cys-498, Cys-521, Cys-524, Cys-536, and Cys-539 each coordinate Zn(2+). Residues 550 to 583 (SLSTSLPPSCHQRSKSDPSRLVRSPSPHSCHRAG) form a disordered region. Ser-575 carries the post-translational modification Phosphoserine. The A20-type 4 zinc finger occupies 601–636 (RTGTSKCRKAGCVYFGTPENKGFCTLCFIEYRENKH). The segment at 605–655 (SKCRKAGCVYFGTPENKGFCTLCFIEYRENKHFAAASGKVSPTASRFQNTI) is required for proteasomal degradation of UBE2N and UBE2D3, TRAF6 deubiquitination, and TAX1BP1 interaction with UBE2N. Residues 606-790 (KCRKAGCVYF…ECFQFKQMYG (185 aa)) form a sufficient for inhibitory activity of TNF-induced NF-kappa-B activity region. Zn(2+) is bound by residues Cys-607, Cys-612, Cys-624, and Cys-627. Ser-645 is modified (phosphoserine). Residues 651-686 (FQNTIPCLGRECGTLGSTMFEGYCQKCFIEAQNQRF) form an A20-type 5 zinc finger. Zn(2+) is bound by residues Cys-657, Cys-662, Cys-674, and Cys-677. Residues 689 to 705 (AKRTEEQLRSSQRRDVP) show a composition bias toward basic and acidic residues. The disordered stretch occupies residues 689 to 712 (AKRTEEQLRSSQRRDVPRTTQSTS). The segment at 697-790 (RSSQRRDVPR…ECFQFKQMYG (94 aa)) is required for lysosomal localization and for TRAF2 lysosomal degradation. A20-type zinc fingers lie at residues 710–745 (STSR…RMGP) and 756–790 (DPPK…QMYG). Residues Cys-716, Cys-721, Cys-733, Cys-736, Cys-762, Cys-767, Cys-779, and Cys-782 each contribute to the Zn(2+) site.

It belongs to the peptidase C64 family. In terms of assembly, homodimer. Interacts with TNIP1, TAX1BP1 and TRAF2. Interacts with RNF11, ITCH and TAX1BP1 only after TNF stimulation; these interaction are transient and they are lost after 1 hour of stimulation with TNF. Interacts with YWHAZ and YWHAH. Interacts with IKBKG; the interaction is induced by TNF stimulation and by polyubiquitin. Interacts with RIPK1. Interacts with UBE2N; the interaction requires TAX1BP1. Interacts with TRAF6; the interaction is inhibited by HTLV-1 protein Tax. Proteolytically cleaved by MALT1 upon TCR stimulation; disrupts NF-kappa-B inhibitory function and results in increased IL-2 production. It is proposed that only a fraction of TNFAIP3 colocalized with TCR and CBM complex is cleaved, leaving the main TNFAIP3 pool intact.

Its subcellular location is the cytoplasm. The protein resides in the nucleus. It is found in the lysosome. It catalyses the reaction Thiol-dependent hydrolysis of ester, thioester, amide, peptide and isopeptide bonds formed by the C-terminal Gly of ubiquitin (a 76-residue protein attached to proteins as an intracellular targeting signal).. In terms of biological role, ubiquitin-editing enzyme that contains both ubiquitin ligase and deubiquitinase activities. Involved in immune and inflammatory responses signaled by cytokines, such as TNF-alpha and IL-1 beta, or pathogens via Toll-like receptors (TLRs) through terminating NF-kappa-B activity. Essential component of a ubiquitin-editing protein complex, comprising also RNF11, ITCH and TAX1BP1, that ensures the transient nature of inflammatory signaling pathways. In cooperation with TAX1BP1 promotes disassembly of E2-E3 ubiquitin protein ligase complexes in IL-1R and TNFR-1 pathways; affected are at least E3 ligases TRAF6, TRAF2 and BIRC2, and E2 ubiquitin-conjugating enzymes UBE2N and UBE2D3. In cooperation with TAX1BP1 promotes ubiquitination of UBE2N and proteasomal degradation of UBE2N and UBE2D3. Upon TNF stimulation, deubiquitinates 'Lys-63'-polyubiquitin chains on RIPK1 and catalyzes the formation of 'Lys-48'-polyubiquitin chains. This leads to RIPK1 proteasomal degradation and consequently termination of the TNF- or LPS-mediated activation of NF-kappa-B. Deubiquitinates TRAF6 probably acting on 'Lys-63'-linked polyubiquitin. Upon T-cell receptor (TCR)-mediated T-cell activation, deubiquitinates 'Lys-63'-polyubiquitin chains on MALT1 thereby mediating disassociation of the CBM (CARD11:BCL10:MALT1) and IKK complexes and preventing sustained IKK activation. Deubiquitinates NEMO/IKBKG; the function is facilitated by TNIP1 and leads to inhibition of NF-kappa-B activation. Upon stimulation by bacterial peptidoglycans, probably deubiquitinates RIPK2. Can also inhibit I-kappa-B-kinase (IKK) through a non-catalytic mechanism which involves polyubiquitin; polyubiquitin promotes association with IKBKG and prevents IKK MAP3K7-mediated phosphorylation. Targets TRAF2 for lysosomal degradation. In vitro able to deubiquitinate 'Lys-11'-, 'Lys-48'- and 'Lys-63' polyubiquitin chains. Inhibitor of programmed cell death. Has a role in the function of the lymphoid system. Required for LPS-induced production of pro-inflammatory cytokines and IFN beta in LPS-tolerized macrophages. The sequence is that of Tumor necrosis factor alpha-induced protein 3 (TNFAIP3) from Homo sapiens (Human).